The chain runs to 138 residues: Phosphoribosyl-AMP cyclohydrolase (138 aa).

Asp-84 lines the Mg(2+) pocket. A Zn(2+)-binding site is contributed by Cys-85. Positions 86 and 88 each coordinate Mg(2+). Cys-102 and Cys-109 together coordinate Zn(2+).

This sequence belongs to the PRA-CH family. Homodimer. Mg(2+) serves as cofactor. Requires Zn(2+) as cofactor.

Its subcellular location is the cytoplasm. The enzyme catalyses 1-(5-phospho-beta-D-ribosyl)-5'-AMP + H2O = 1-(5-phospho-beta-D-ribosyl)-5-[(5-phospho-beta-D-ribosylamino)methylideneamino]imidazole-4-carboxamide. Its pathway is amino-acid biosynthesis; L-histidine biosynthesis; L-histidine from 5-phospho-alpha-D-ribose 1-diphosphate: step 3/9. Functionally, catalyzes the hydrolysis of the adenine ring of phosphoribosyl-AMP. The protein is Phosphoribosyl-AMP cyclohydrolase of Burkholderia vietnamiensis (strain G4 / LMG 22486) (Burkholderia cepacia (strain R1808)).